The chain runs to 296 residues: MRRSLTAGLALVLIAGAAGLWLTRPVKSDPELFAGLTGEASRGERIFWAGGCASCHAAPDASGEARLVLSGGERLTTDFGTFVVPNISPDPDHGIGGWTVADLDSALRHGTSPERSHYYPSFPYTSYAHVEPQDVADLKAFLDTLPPSDRADEPHDLAFPFNQRIILGGWKLLAGGPSWIVEGDLAPEEERGRYLVEGLGHCGECHTPRNGLGLRDKSRWLAGGPNPEGRGTIPNITPAKLDWSAGDIAEYLSSGFTPDYDSAGGQMADVVRNTSQLPDEDRRAIAAYLKRVPAIE.

Heme c contacts are provided by Cys52, Cys55, His56, Cys202, Cys205, and His206.

In terms of processing, binds 2 heme c groups covalently per subunit.

The protein resides in the cell membrane. Particularly expressed when cells generate energy via aerobic respiration. The protein is Diheme cytochrome c-type (cycG) of Cereibacter sphaeroides (strain ATCC 17023 / DSM 158 / JCM 6121 / CCUG 31486 / LMG 2827 / NBRC 12203 / NCIMB 8253 / ATH 2.4.1.) (Rhodobacter sphaeroides).